Here is a 436-residue protein sequence, read N- to C-terminus: Trigger factor (436 aa).

The PPIase FKBP-type domain occupies G161–P246.

This sequence belongs to the FKBP-type PPIase family. Tig subfamily.

The protein localises to the cytoplasm. It catalyses the reaction [protein]-peptidylproline (omega=180) = [protein]-peptidylproline (omega=0). Its function is as follows. Involved in protein export. Acts as a chaperone by maintaining the newly synthesized protein in an open conformation. Functions as a peptidyl-prolyl cis-trans isomerase. The protein is Trigger factor of Ectopseudomonas mendocina (strain ymp) (Pseudomonas mendocina).